The sequence spans 301 residues: 4-hydroxybenzoate octaprenyltransferase (301 aa).

8 helical membrane passes run 34–54, 57–77, 108–128, 152–172, 176–196, 221–241, 245–265, and 279–299; these read IGSL…ADGL, LWTL…GCVI, LWVF…LNWL, LPQV…FAAV, VPLL…AYDT, FDLI…VLVG, DLGV…AYEF, and AFLH…VAVA.

Belongs to the UbiA prenyltransferase family. Mg(2+) is required as a cofactor.

Its subcellular location is the cell inner membrane. The catalysed reaction is all-trans-octaprenyl diphosphate + 4-hydroxybenzoate = 4-hydroxy-3-(all-trans-octaprenyl)benzoate + diphosphate. Its pathway is cofactor biosynthesis; ubiquinone biosynthesis. Its function is as follows. Catalyzes the prenylation of para-hydroxybenzoate (PHB) with an all-trans polyprenyl group. Mediates the second step in the final reaction sequence of ubiquinone-8 (UQ-8) biosynthesis, which is the condensation of the polyisoprenoid side chain with PHB, generating the first membrane-bound Q intermediate 3-octaprenyl-4-hydroxybenzoate. This Xanthomonas euvesicatoria pv. vesicatoria (strain 85-10) (Xanthomonas campestris pv. vesicatoria) protein is 4-hydroxybenzoate octaprenyltransferase.